A 229-amino-acid chain; its full sequence is MDSLRDPEHALVVLSGGQDSTTCLYWALSRFAQVSAISFDYGQRHRVELDAARTIAAMAGVGHTIIPINTFSALGGNALTDQQMSPDTGPDAETLLPNTFVPGRNLVFLTFAAAWAWPRGIRHIVTGVAQTDYSGYPDCRENTLRALELAINLGMESRMRLHMPLMFLSKADTVTLARTVGAMPALAFSHTCYAGAVPPCGQCAACVLRAKGFAEAGIPDPLLNRLAGV.

ATP is bound at residue 14 to 24; the sequence is LSGGQDSTTCL. Positions 192, 200, 203, and 206 each coordinate Zn(2+).

This sequence belongs to the QueC family. Zn(2+) serves as cofactor.

The catalysed reaction is 7-carboxy-7-deazaguanine + NH4(+) + ATP = 7-cyano-7-deazaguanine + ADP + phosphate + H2O + H(+). The protein operates within purine metabolism; 7-cyano-7-deazaguanine biosynthesis. Its function is as follows. Catalyzes the ATP-dependent conversion of 7-carboxy-7-deazaguanine (CDG) to 7-cyano-7-deazaguanine (preQ(0)). This is 7-cyano-7-deazaguanine synthase from Laribacter hongkongensis (strain HLHK9).